The chain runs to 303 residues: UDP-3-O-acyl-N-acetylglucosamine deacetylase (303 aa).

Residues H78, H237, and D241 each coordinate Zn(2+). H264 acts as the Proton donor in catalysis.

Belongs to the LpxC family. Zn(2+) serves as cofactor.

It carries out the reaction a UDP-3-O-[(3R)-3-hydroxyacyl]-N-acetyl-alpha-D-glucosamine + H2O = a UDP-3-O-[(3R)-3-hydroxyacyl]-alpha-D-glucosamine + acetate. Its pathway is glycolipid biosynthesis; lipid IV(A) biosynthesis; lipid IV(A) from (3R)-3-hydroxytetradecanoyl-[acyl-carrier-protein] and UDP-N-acetyl-alpha-D-glucosamine: step 2/6. Functionally, catalyzes the hydrolysis of UDP-3-O-myristoyl-N-acetylglucosamine to form UDP-3-O-myristoylglucosamine and acetate, the committed step in lipid A biosynthesis. This is UDP-3-O-acyl-N-acetylglucosamine deacetylase from Xanthomonas euvesicatoria pv. vesicatoria (strain 85-10) (Xanthomonas campestris pv. vesicatoria).